Consider the following 186-residue polypeptide: ATP synthase subunit delta (186 aa).

The protein belongs to the ATPase delta chain family. In terms of assembly, F-type ATPases have 2 components, F(1) - the catalytic core - and F(0) - the membrane proton channel. F(1) has five subunits: alpha(3), beta(3), gamma(1), delta(1), epsilon(1). F(0) has three main subunits: a(1), b(2) and c(10-14). The alpha and beta chains form an alternating ring which encloses part of the gamma chain. F(1) is attached to F(0) by a central stalk formed by the gamma and epsilon chains, while a peripheral stalk is formed by the delta and b chains.

It localises to the cell inner membrane. Its function is as follows. F(1)F(0) ATP synthase produces ATP from ADP in the presence of a proton or sodium gradient. F-type ATPases consist of two structural domains, F(1) containing the extramembraneous catalytic core and F(0) containing the membrane proton channel, linked together by a central stalk and a peripheral stalk. During catalysis, ATP synthesis in the catalytic domain of F(1) is coupled via a rotary mechanism of the central stalk subunits to proton translocation. In terms of biological role, this protein is part of the stalk that links CF(0) to CF(1). It either transmits conformational changes from CF(0) to CF(1) or is implicated in proton conduction. The sequence is that of ATP synthase subunit delta from Bacteroides fragilis (strain ATCC 25285 / DSM 2151 / CCUG 4856 / JCM 11019 / LMG 10263 / NCTC 9343 / Onslow / VPI 2553 / EN-2).